A 242-amino-acid polypeptide reads, in one-letter code: Small ribosomal subunit protein uS2 (242 aa).

The protein belongs to the universal ribosomal protein uS2 family.

The chain is Small ribosomal subunit protein uS2 from Pseudoalteromonas translucida (strain TAC 125).